The primary structure comprises 181 residues: Acireductone dioxygenase (181 aa).

Fe(2+)-binding residues include histidine 97, histidine 99, glutamate 103, and histidine 141. Residues histidine 97, histidine 99, glutamate 103, and histidine 141 each coordinate Ni(2+).

It belongs to the acireductone dioxygenase (ARD) family. In terms of assembly, monomer. It depends on Fe(2+) as a cofactor. The cofactor is Ni(2+).

The catalysed reaction is 1,2-dihydroxy-5-(methylsulfanyl)pent-1-en-3-one + O2 = 3-(methylsulfanyl)propanoate + CO + formate + 2 H(+). It carries out the reaction 1,2-dihydroxy-5-(methylsulfanyl)pent-1-en-3-one + O2 = 4-methylsulfanyl-2-oxobutanoate + formate + 2 H(+). It participates in amino-acid biosynthesis; L-methionine biosynthesis via salvage pathway; L-methionine from S-methyl-5-thio-alpha-D-ribose 1-phosphate: step 5/6. Catalyzes 2 different reactions between oxygen and the acireductone 1,2-dihydroxy-3-keto-5-methylthiopentene (DHK-MTPene) depending upon the metal bound in the active site. Fe-containing acireductone dioxygenase (Fe-ARD) produces formate and 2-keto-4-methylthiobutyrate (KMTB), the alpha-ketoacid precursor of methionine in the methionine recycle pathway. Ni-containing acireductone dioxygenase (Ni-ARD) produces methylthiopropionate, carbon monoxide and formate, and does not lie on the methionine recycle pathway. The protein is Acireductone dioxygenase of Pseudomonas syringae pv. syringae (strain B728a).